A 57-amino-acid polypeptide reads, in one-letter code: Large ribosomal subunit protein bL32 (57 aa).

The segment covering 1–16 (MAVQKSRKTRSKRGMR) has biased composition (basic residues). Residues 1–45 (MAVQKSRKTRSKRGMRRSHDALTAPAQLSVDATSGETHRRHHMTA) form a disordered region.

The protein belongs to the bacterial ribosomal protein bL32 family.

This Psychromonas ingrahamii (strain DSM 17664 / CCUG 51855 / 37) protein is Large ribosomal subunit protein bL32.